A 497-amino-acid chain; its full sequence is 4,4'-diaponeurosporene oxygenase (497 aa).

An FAD-binding site is contributed by 7-19; that stretch reads VIGGGLGGISAAI.

The protein belongs to the carotenoid/retinoid oxidoreductase family. CrtP subfamily. The cofactor is FAD.

The enzyme catalyses all-trans-4,4'-diaponeurosporene + 2 AH2 + 2 O2 = 4,4'-diaponeurosporenal + 2 A + 3 H2O. It participates in carotenoid biosynthesis; staphyloxanthin biosynthesis; staphyloxanthin from farnesyl diphosphate: step 3/5. Involved in the biosynthesis of the yellow-orange carotenoid staphyloxanthin, which plays a role in the virulence via its protective function against oxidative stress. Catalyzes the oxidation of the terminal methyl side group of 4,4'-diaponeurosporene to form 4,4'-diaponeurosporen-4-al. The sequence is that of 4,4'-diaponeurosporene oxygenase from Staphylococcus aureus (strain USA300).